Consider the following 952-residue polypeptide: Meiosis-specific coiled-coil domain-containing protein MEIOC (952 aa).

Disordered regions lie at residues 1 to 23 (MEVRRGDTCPRPHPSGLREEGLE), 609 to 629 (QAKPQSGHYDPEEGPKHLDGL), and 933 to 952 (VHESINSSNPMNQRGETNKH). A compositionally biased stretch (basic and acidic residues) spans 617–627 (YDPEEGPKHLD). The segment covering 936-952 (SINSSNPMNQRGETNKH) has biased composition (polar residues).

Interacts with YTHDC2; binds transcript that regulate the mitotic cell cycle inhibiting progression into metaphase, thereby allowing meiotic prophase to proceed normally. Interacts with RBM46. As to expression, expressed in fetal ovaries. Expressed in testis.

Its subcellular location is the cytoplasm. The protein resides in the nucleus. Is required for meiosis completion in both male and female germ cells. Confers stability to numerous meiotic mRNAs in gonads allowing proper initiation and progression into meiosis prophase I. The function may involve YTHDC2 and is independent of induction by retinoic acid (RA). Maintains an extended meiotic prophase I by properly promoting the transition from a mitotic to a meiotic cell cycle program by binding transcripts through its interaction with YTHDC2 that regulate the mitotic cell cycle. This chain is Meiosis-specific coiled-coil domain-containing protein MEIOC, found in Homo sapiens (Human).